A 149-amino-acid polypeptide reads, in one-letter code: Oocyte-expressed protein homolog (149 aa).

The disordered stretch occupies residues Met-1 to Glu-22. The region spanning Pro-49 to Leu-110 is the KH; atypical domain.

It belongs to the KHDC1 family. Component of the subcortical maternal complex (SCMC), at least composed of NLRP5, KHDC3L, OOEP, and TLE6 isoform 1. Within the complex, interacts with NLRP5, KHDC3L and TLE6 isoform 1. As part of the SCMC interacts with the SCMC-associated protein NLRP4F. The SCMC may facilitate translocation of its components between the nuclear and cytoplasmic compartments. Forms a scaffold complex with KHDC3L/FILIA, and interacts with BLM and TRIM25 at DNA replication forks.

It localises to the cytoplasm. It is found in the nucleus. Its function is as follows. Component of the subcortical maternal complex (SCMC), a multiprotein complex that plays a key role in early embryonic development. The SCMC complex is a structural constituent of cytoplasmic lattices, which consist in fibrous structures found in the cytoplasm of oocytes and preimplantation embryos. They are required to store maternal proteins critical for embryonic development, such as proteins that control epigenetic reprogramming of the preimplantation embryo, and prevent their degradation or activation. As part of the OOEP-KHDC3 scaffold, recruits BLM and TRIM25 to DNA replication forks, thereby promoting the ubiquitination of BLM by TRIM25, enhancing BLM retainment at replication forks and therefore promoting stalled replication fork restart. Positively regulates the homologous recombination-mediated DNA double-strand break (DSB) repair pathway by regulating ATM activation and RAD51 recruitment to DSBs in oocytes. Thereby contributes to oocyte survival and the resumption and completion of meiosis. This chain is Oocyte-expressed protein homolog, found in Homo sapiens (Human).